Reading from the N-terminus, the 225-residue chain is UPF0173 metal-dependent hydrolase PF1764 (225 aa).

Belongs to the UPF0173 family.

This chain is UPF0173 metal-dependent hydrolase PF1764, found in Pyrococcus furiosus (strain ATCC 43587 / DSM 3638 / JCM 8422 / Vc1).